Reading from the N-terminus, the 423-residue chain is Glycine amidinotransferase, mitochondrial (423 aa).

A mitochondrion-targeting transit peptide spans 1 to 43; it reads MLRVRCLRGGSRGAEAVHYIGSRLGRTLTGWVQRTFQSTQAAT. The interval 43–63 is disordered; it reads TASSRNSFAADDKATEPLPKD. Residues Ser46 and Ser49 each carry the phosphoserine modification. Basic and acidic residues predominate over residues 52–61; that stretch reads ADDKATEPLP. Residue Asp170 participates in arginine binding. Active-site residues include Asp254 and His303. Residues Asp305, Arg322, Ser354, and Ser355 each coordinate arginine. Lys385 carries the post-translational modification N6-acetyllysine. The Amidino-cysteine intermediate role is filled by Cys407.

This sequence belongs to the amidinotransferase family. In terms of assembly, homodimer.

It is found in the mitochondrion inner membrane. The catalysed reaction is L-arginine + glycine = guanidinoacetate + L-ornithine. It carries out the reaction 4-aminobutanoate + L-arginine = 4-guanidinobutanoate + L-ornithine. It catalyses the reaction beta-alanine + L-arginine = 3-guanidinopropanoate + L-ornithine. The enzyme catalyses taurine + L-arginine = taurocyamine + L-ornithine. It functions in the pathway amine and polyamine biosynthesis; creatine biosynthesis; creatine from L-arginine and glycine: step 1/2. Its function is as follows. Transamidinase that catalyzes the transfer of the amidino group of L-arginine onto the amino moiety of acceptor metabolites such as glycine, beta-alanine, gamma-aminobutyric acid (GABA) and taurine yielding the corresponding guanidine derivatives. Catalyzes the rate-limiting step of creatine biosynthesis, namely the transfer of the amidino group from L-arginine to glycine to generate guanidinoacetate, which is then methylated by GAMT to form creatine. Provides creatine as a source for ATP generation in tissues with high energy demands, in particular skeletal muscle, heart and brain. The polypeptide is Glycine amidinotransferase, mitochondrial (GATM) (Macaca fascicularis (Crab-eating macaque)).